A 180-amino-acid polypeptide reads, in one-letter code: ATP synthase subunit b, chloroplastic (180 aa).

A helical transmembrane segment spans residues 28–48; the sequence is VTTLINIGVVLCLLIIFGKGF.

It belongs to the ATPase B chain family. F-type ATPases have 2 components, F(1) - the catalytic core - and F(0) - the membrane proton channel. F(1) has five subunits: alpha(3), beta(3), gamma(1), delta(1), epsilon(1). F(0) has four main subunits: a(1), b(1), b'(1) and c(10-14). The alpha and beta chains form an alternating ring which encloses part of the gamma chain. F(1) is attached to F(0) by a central stalk formed by the gamma and epsilon chains, while a peripheral stalk is formed by the delta, b and b' chains.

The protein localises to the plastid. It is found in the chloroplast thylakoid membrane. F(1)F(0) ATP synthase produces ATP from ADP in the presence of a proton or sodium gradient. F-type ATPases consist of two structural domains, F(1) containing the extramembraneous catalytic core and F(0) containing the membrane proton channel, linked together by a central stalk and a peripheral stalk. During catalysis, ATP synthesis in the catalytic domain of F(1) is coupled via a rotary mechanism of the central stalk subunits to proton translocation. In terms of biological role, component of the F(0) channel, it forms part of the peripheral stalk, linking F(1) to F(0). This is ATP synthase subunit b, chloroplastic from Cuscuta obtusiflora (Peruvian dodder).